The sequence spans 317 residues: 3-oxoacyl-[acyl-carrier-protein] reductase 5, chloroplastic (317 aa).

The transit peptide at Thr-1–Gln-57 directs the protein to the chloroplast. NADP(+) is bound at residue Val-79–Val-103. Substrate is bound at residue Ser-211. The active-site Proton acceptor is Tyr-224.

Belongs to the short-chain dehydrogenases/reductases (SDR) family. In terms of assembly, homotetramer.

It is found in the plastid. It localises to the chloroplast. The enzyme catalyses a (3R)-hydroxyacyl-[ACP] + NADP(+) = a 3-oxoacyl-[ACP] + NADPH + H(+). It functions in the pathway lipid metabolism; fatty acid biosynthesis. The sequence is that of 3-oxoacyl-[acyl-carrier-protein] reductase 5, chloroplastic (bkr1) from Brassica napus (Rape).